The chain runs to 398 residues: WW domain-binding protein 4 (398 aa).

Residues 11–42 (KFCDYCKCWIADNRPSIDFHERGKNHKENVAK) form a Matrin-type zinc finger. Disordered regions lie at residues 84–182 (GIKP…SVWV), 200–274 (VSTW…KLSP), 300–350 (LASK…PPVL), and 379–398 (KKRE…LDDQ). The segment covering 92-103 (PSSTLNKTQSIT) has biased composition (polar residues). Basic residues predominate over residues 112 to 125 (KKEKKEKKEKKKKT). The segment covering 126 to 139 (REGTSESPKTEPKE) has biased composition (basic and acidic residues). WW domains follow at residues 134–167 (KTEP…KPKG) and 175–208 (SHTG…KPDG). The span at 169 to 178 (QGNSKTSHTG) shows a compositional bias: polar residues. The span at 221 to 232 (KHSEEADSRASE) shows a compositional bias: basic and acidic residues. The span at 233–242 (SDSEQEDSES) shows a compositional bias: acidic residues. A compositionally biased stretch (basic and acidic residues) spans 305-316 (ASSDESKTDTYG). Residues 324-333 (EEEEEPDEKV) show a composition bias toward acidic residues.

Component of the spliceosome B complex. Associated with U2 snRNPs. Binds splicing factors SNRPB, SNRPC and SF1.

The protein resides in the nucleus. It is found in the nucleus speckle. Its function is as follows. Involved in pre-mRNA splicing as a component of the spliceosome. May play a role in cross-intron bridging of U1 and U2 snRNPs in the mammalian A complex. The polypeptide is WW domain-binding protein 4 (WBP4) (Gallus gallus (Chicken)).